A 242-amino-acid chain; its full sequence is Ribose-5-phosphate isomerase A (242 aa).

Substrate is bound by residues serine 39–threonine 42, aspartate 95–aspartate 98, and lysine 108–glycine 111. The active-site Proton acceptor is the glutamate 117. Lysine 135 lines the substrate pocket.

The protein belongs to the ribose 5-phosphate isomerase family. Homodimer.

It carries out the reaction aldehydo-D-ribose 5-phosphate = D-ribulose 5-phosphate. It participates in carbohydrate degradation; pentose phosphate pathway; D-ribose 5-phosphate from D-ribulose 5-phosphate (non-oxidative stage): step 1/1. In terms of biological role, catalyzes the reversible conversion of ribose-5-phosphate to ribulose 5-phosphate. In Chlamydia trachomatis serovar A (strain ATCC VR-571B / DSM 19440 / HAR-13), this protein is Ribose-5-phosphate isomerase A.